A 535-amino-acid chain; its full sequence is uncharacterized protein (535 aa).

6 helical membrane-spanning segments follow: residues 63–83 (LTGI…PSIY), 90–110 (VTFG…TYWI), 143–163 (VAAV…TLYG), 168–188 (VFVT…ATNC), 226–246 (SLGS…VLLV), and 258–278 (VLIL…ILAW). The region spanning 279–330 (LTAAPVRVVRAALKRVEQGDLRGDLVVFDGTELGELQRGFNAMVNGLRERER) is the HAMP domain. A Guanylate cyclase domain is found at 362 to 486 (AVVFVDIVGS…KPVNQAARLC (125 aa)).

This sequence belongs to the adenylyl cyclase class-3 family.

It is found in the cell membrane. This is an uncharacterized protein from Mycobacterium tuberculosis (strain ATCC 25618 / H37Rv).